An 833-amino-acid chain; its full sequence is Leucine--tRNA ligase (833 aa).

The 'HIGH' region signature appears at 41–52 (PYPSGAGLHVGH). The 'KMSKS' region signature appears at 610–614 (KMSKS). K613 serves as a coordination point for ATP.

The protein belongs to the class-I aminoacyl-tRNA synthetase family.

The protein resides in the cytoplasm. The enzyme catalyses tRNA(Leu) + L-leucine + ATP = L-leucyl-tRNA(Leu) + AMP + diphosphate. This Streptococcus pneumoniae (strain ATCC 700669 / Spain 23F-1) protein is Leucine--tRNA ligase.